Reading from the N-terminus, the 135-residue chain is Global transcriptional regulator Spx 2 (135 aa).

Cys-10 is a catalytic residue.

This sequence belongs to the ArsC family. Spx subfamily. As to quaternary structure, interacts with the C-terminal domain of the alpha subunit of the RNAP.

Its subcellular location is the cytoplasm. Global transcriptional regulator that plays a key role in stress response and exerts either positive or negative regulation of genes. Acts by interacting with the C-terminal domain of the alpha subunit of the RNA polymerase (RNAP). This interaction can enhance binding of RNAP to the promoter region of target genes and stimulate their transcription, or block interaction of RNAP with activator. This is Global transcriptional regulator Spx 2 from Oceanobacillus iheyensis (strain DSM 14371 / CIP 107618 / JCM 11309 / KCTC 3954 / HTE831).